Here is a 66-residue protein sequence, read N- to C-terminus: Large ribosomal subunit protein bL35 (66 aa).

Belongs to the bacterial ribosomal protein bL35 family.

The sequence is that of Large ribosomal subunit protein bL35 from Moorella thermoacetica (strain ATCC 39073 / JCM 9320).